The chain runs to 154 residues: Methylglyoxal synthase (154 aa).

One can recognise an MGS-like domain in the interval 6 to 154 (SPLPANKAIA…AYMARRAQGN (149 aa)). Substrate contacts are provided by residues histidine 19, lysine 23, 45 to 48 (TGTT), and 65 to 66 (SG). The active-site Proton donor/acceptor is aspartate 71. Substrate is bound at residue histidine 98.

Belongs to the methylglyoxal synthase family.

The enzyme catalyses dihydroxyacetone phosphate = methylglyoxal + phosphate. Functionally, catalyzes the formation of methylglyoxal from dihydroxyacetone phosphate. The protein is Methylglyoxal synthase of Cellvibrio japonicus (strain Ueda107) (Pseudomonas fluorescens subsp. cellulosa).